The sequence spans 285 residues: MPPAVRQGMRTVGTLRVTRPSSYVLSSREFSVLNRPPPNYPGHIPLTTIERGALAVGSAIGSLLNPRRADLIAALGEATATPYFIYRLRDAMLSNPTGRRILRDRPRISSKTLSVEYLRSLPPNSVGRTYVSWLDREGVGPDTRETVRYIDDEECAYVMQRYRECHDFYHAVTGLPIVVEGEVSLKTFEFANTLLPMTGLSMFAVMRLKPEERERYWKLHLPWAVRSGLASKEVINVYWEEELERDVNELREKLGIEKPPDLREIRKMMRRQKKAAKAAREKFEN.

The N-terminal 11 residues, 1–11, are a transit peptide targeting the mitochondrion; that stretch reads MPPAVRQGMRT. Positions 166, 167, 170, and 182 each coordinate Zn(2+).

This sequence belongs to the COQ4 family. Component of a multi-subunit COQ enzyme complex, composed of at least COQ3, COQ4, COQ5, COQ6, COQ7 and COQ9. The cofactor is Zn(2+).

The protein localises to the mitochondrion inner membrane. The enzyme catalyses a 4-hydroxy-3-methoxy-5-(all-trans-polyprenyl)benzoate + H(+) = a 2-methoxy-6-(all-trans-polyprenyl)phenol + CO2. Its pathway is cofactor biosynthesis; ubiquinone biosynthesis. Its function is as follows. Lyase that catalyzes the C1-decarboxylation of 4-hydroxy-3-methoxy-5-(all-trans-polyprenyl)benzoic acid into 2-methoxy-6-(all-trans-polyprenyl)phenol during ubiquinone biosynthesis. This is Ubiquinone biosynthesis protein COQ4, mitochondrial from Paracoccidioides lutzii (strain ATCC MYA-826 / Pb01) (Paracoccidioides brasiliensis).